A 65-amino-acid chain; its full sequence is Conotoxin Bu19 (65 aa).

Residues 1-21 (MGMRMVFTVFLLVVLATTVVS) form the signal peptide. Residues 22 to 48 (FTSDRASDGRNAAANDKASDLAALAVR) constitute a propeptide that is removed on maturation. 2 disulfide bridges follow: cysteine 50-cysteine 56 and cysteine 51-cysteine 64. At cysteine 64 the chain carries Cysteine amide.

It belongs to the conotoxin A superfamily. In terms of tissue distribution, expressed by the venom duct.

Its subcellular location is the secreted. This Conus bullatus (Bubble cone) protein is Conotoxin Bu19.